The primary structure comprises 490 residues: ATP synthase subunit beta, chloroplastic (490 aa).

170 to 177 contacts ATP; it reads GGAGVGKT.

This sequence belongs to the ATPase alpha/beta chains family. As to quaternary structure, F-type ATPases have 2 components, CF(1) - the catalytic core - and CF(0) - the membrane proton channel. CF(1) has five subunits: alpha(3), beta(3), gamma(1), delta(1), epsilon(1). CF(0) has four main subunits: a(1), b(1), b'(1) and c(9-12).

It localises to the plastid. The protein resides in the chloroplast thylakoid membrane. The enzyme catalyses ATP + H2O + 4 H(+)(in) = ADP + phosphate + 5 H(+)(out). Its function is as follows. Produces ATP from ADP in the presence of a proton gradient across the membrane. The catalytic sites are hosted primarily by the beta subunits. The polypeptide is ATP synthase subunit beta, chloroplastic (Ipomoea quamoclit (Cypress vine)).